A 450-amino-acid chain; its full sequence is Crinkler effector protein 63 (450 aa).

The signal sequence occupies residues 1–17 (MVKLFCAIVGAAGSAFP). An LQLFLAK domain region spans residues 18 to 55 (VDIDAGQSAGDLKDAIKAKNPATITCDAKDLQLSLAKT). The tract at residues 58 to 117 (GAWLPDDDQAALDLEDGKVHEDIQALIDGEKMKATWTIEDVLTANNMTKRKGRAPKSRQI) is DWL domain. A glycan (N-linked (GlcNAc...) asparagine) is linked at asparagine 103. Residues 118-124 (HVLVVVP) carry the HVLVXXP motif motif. The effector domain stretch occupies residues 125–450 (EGAFGSASET…RSIPTFSYFS (326 aa)). The Nuclear localization signal (NLS) motif lies at 218–224 (QRKRYRR). Residue asparagine 342 is glycosylated (N-linked (GlcNAc...) asparagine).

This sequence belongs to the Crinkler effector family. Forms a homodimer via an inverted association manner. Forms heterodimers with CRN79 and CRN115.

The protein resides in the secreted. Its subcellular location is the host nucleus. It localises to the host nucleoplasm. Functionally, secreted effector that, with CRN115, is critical to pathogenesis by modulating host defenses. Induces cell death in plant host cells. Suppresses callose deposition and affects expression of defense-related genes including two salicylic acid (SA) signal-induced and antimicrobial PR genes (PR1 and PR2), and genes involved in jasmonic acid (JA)/ethylene (ET)-mediated defense pathway (ERF1, ORA59, PDF1.2). CRN115 and CRN63 may share the same molecular host targets that are involved in the cell death signal transduction pathway and that their differential activities are dependent on plant nuclear localization or not. Does not affect MAPK activation and BIK1 phosphorylation and acts downstream of the MAPK cascades in PTI signaling. The sequence is that of Crinkler effector protein 63 from Phytophthora sojae (strain P6497) (Soybean stem and root rot agent).